A 498-amino-acid chain; its full sequence is Protein MGF 505-5R (498 aa).

The protein belongs to the asfivirus MGF 505 family.

Plays a role in virus cell tropism, and may be required for efficient virus replication in macrophages. The protein is Protein MGF 505-5R of Ornithodoros (relapsing fever ticks).